Consider the following 128-residue polypeptide: Lymphocyte antigen 6D (128 aa).

A signal peptide spans 1-20 (MRTALLLLAALAVATGPALT). Residues 21–108 (LRCHVCTSSS…AAPTRTALAH (88 aa)) form the UPAR/Ly6 domain. 5 disulfides stabilise this stretch: Cys-23/Cys-45, Cys-26/Cys-32, Cys-38/Cys-63, Cys-67/Cys-86, and Cys-87/Cys-92. Asn-98 is lipidated: GPI-anchor amidated asparagine. Residues 99-128 (AAPTRTALAHSALSLGLALSLLAVILAPSL) constitute a propeptide, removed in mature form.

As to expression, expressed exclusively at the outer cell surface of transitional epithelia and the keratinocyte of stratified squamous epithelia.

It localises to the cell membrane. Functionally, may act as a specification marker at earliest stage specification of lymphocytes between B- and T-cell development. Marks the earliest stage of B-cell specification. This chain is Lymphocyte antigen 6D (LY6D), found in Homo sapiens (Human).